The primary structure comprises 195 residues: Glycerol-3-phosphate acyltransferase (195 aa).

5 consecutive transmembrane segments (helical) span residues Phe-3–Leu-23, Leu-52–Gln-72, Ile-80–Phe-100, Leu-113–Leu-133, and Leu-147–Ile-167.

The protein belongs to the PlsY family. In terms of assembly, probably interacts with PlsX.

It is found in the cell inner membrane. It carries out the reaction an acyl phosphate + sn-glycerol 3-phosphate = a 1-acyl-sn-glycero-3-phosphate + phosphate. The protein operates within lipid metabolism; phospholipid metabolism. Catalyzes the transfer of an acyl group from acyl-phosphate (acyl-PO(4)) to glycerol-3-phosphate (G3P) to form lysophosphatidic acid (LPA). This enzyme utilizes acyl-phosphate as fatty acyl donor, but not acyl-CoA or acyl-ACP. This chain is Glycerol-3-phosphate acyltransferase, found in Ehrlichia ruminantium (strain Gardel).